The chain runs to 105 residues: Small ribosomal subunit protein uS10 (105 aa).

The protein belongs to the universal ribosomal protein uS10 family. As to quaternary structure, part of the 30S ribosomal subunit.

Its function is as follows. Involved in the binding of tRNA to the ribosomes. This Legionella pneumophila (strain Paris) protein is Small ribosomal subunit protein uS10.